We begin with the raw amino-acid sequence, 209 residues long: Outer-membrane lipoprotein LolB (209 aa).

The signal sequence occupies residues 1 to 17 (MATVFSRALGALVLGVA). Cys18 is lipidated: N-palmitoyl cysteine. The S-diacylglycerol cysteine moiety is linked to residue Cys18.

The protein belongs to the LolB family. Monomer.

The protein resides in the cell outer membrane. In terms of biological role, plays a critical role in the incorporation of lipoproteins in the outer membrane after they are released by the LolA protein. The chain is Outer-membrane lipoprotein LolB from Ralstonia nicotianae (strain ATCC BAA-1114 / GMI1000) (Ralstonia solanacearum).